The primary structure comprises 179 residues: Large ribosomal subunit protein uL6 (179 aa).

It belongs to the universal ribosomal protein uL6 family. Part of the 50S ribosomal subunit.

Functionally, this protein binds to the 23S rRNA, and is important in its secondary structure. It is located near the subunit interface in the base of the L7/L12 stalk, and near the tRNA binding site of the peptidyltransferase center. This chain is Large ribosomal subunit protein uL6, found in Rhodococcus jostii (strain RHA1).